A 409-amino-acid chain; its full sequence is Isovaleryl-CoA dehydrogenase, mitochondrial (409 aa).

The transit peptide at 1 to 22 (MQRFFSARSILGYAVKTRRRSF) directs the protein to the mitochondrion. Residues 151–160 (LAMSEPNAGS) and 184–186 (WCT) contribute to the FAD site. Serine 160 contacts substrate. Residues 206-207 (SK), tyrosine 261, and 268-271 (DLER) each bind substrate. The active-site Proton acceptor is glutamate 270. Residues arginine 296, glutamine 307, and 364-368 (QCLGG) each bind FAD. Substrate is bound at residue 391 to 392 (AG). Position 393-395 (393-395 (TSE)) interacts with FAD.

Belongs to the acyl-CoA dehydrogenase family. Homodimer. Requires FAD as cofactor. Expressed in leaves, stems and flowers. Not detected in roots.

The protein resides in the mitochondrion. It carries out the reaction 3-methylbutanoyl-CoA + oxidized [electron-transfer flavoprotein] + H(+) = 3-methylbut-2-enoyl-CoA + reduced [electron-transfer flavoprotein]. Its pathway is amino-acid degradation; L-leucine degradation; (S)-3-hydroxy-3-methylglutaryl-CoA from 3-isovaleryl-CoA: step 1/3. Functionally, involved in degradation of the branched-chain amino acids, phytol and lysine for the supply of carbon and electrons to the ETF/ETFQO complex during dark-induced sugar starvation. The chain is Isovaleryl-CoA dehydrogenase, mitochondrial (IVD) from Arabidopsis thaliana (Mouse-ear cress).